We begin with the raw amino-acid sequence, 781 residues long: Phenylalanine--tRNA ligase beta subunit (781 aa).

A tRNA-binding domain is found at 39–147 (APPFNDVVVA…DDAPVGEDLR (109 aa)). Positions 398-473 (PRREPIELRL…RLFGYDRIPA (76 aa)) constitute a B5 domain. Aspartate 451, aspartate 457, glutamate 460, and glutamate 461 together coordinate Mg(2+). In terms of domain architecture, FDX-ACB spans 687–780 (SRFPQVRRDL…AARRCSATLR (94 aa)).

Belongs to the phenylalanyl-tRNA synthetase beta subunit family. Type 1 subfamily. In terms of assembly, tetramer of two alpha and two beta subunits. Requires Mg(2+) as cofactor.

Its subcellular location is the cytoplasm. The enzyme catalyses tRNA(Phe) + L-phenylalanine + ATP = L-phenylalanyl-tRNA(Phe) + AMP + diphosphate + H(+). The protein is Phenylalanine--tRNA ligase beta subunit of Thiobacillus denitrificans (strain ATCC 25259 / T1).